A 115-amino-acid chain; its full sequence is Nucleoid-associated protein P9211_00201 (115 aa).

Belongs to the YbaB/EbfC family. Homodimer.

Its subcellular location is the cytoplasm. The protein resides in the nucleoid. Functionally, binds to DNA and alters its conformation. May be involved in regulation of gene expression, nucleoid organization and DNA protection. The chain is Nucleoid-associated protein P9211_00201 from Prochlorococcus marinus (strain MIT 9211).